The following is a 145-amino-acid chain: MIKVLVLHGPNLNLLGVREPNIYGRVDFQTLNNLILQKAKEREIEVEIKQSNFEGQLIDWIQEYRDWADAIIINPGALTHYSYSLRDALLAFGKPVIEVHISNIYKREEFRHHSVIAPVALGQISGFGVNSYLLALEAIFLYFNK.

Tyr-23 serves as the catalytic Proton acceptor. Asn-74, His-80, and Asp-87 together coordinate substrate. Catalysis depends on His-100, which acts as the Proton donor. Substrate is bound by residues 101 to 102 (IS) and Arg-111.

This sequence belongs to the type-II 3-dehydroquinase family. As to quaternary structure, homododecamer.

The enzyme catalyses 3-dehydroquinate = 3-dehydroshikimate + H2O. Its pathway is metabolic intermediate biosynthesis; chorismate biosynthesis; chorismate from D-erythrose 4-phosphate and phosphoenolpyruvate: step 3/7. Catalyzes a trans-dehydration via an enolate intermediate. The protein is 3-dehydroquinate dehydratase of Dictyoglomus turgidum (strain DSM 6724 / Z-1310).